The primary structure comprises 439 residues: Xylose isomerase (439 aa).

Catalysis depends on residues H101 and D104. Residues E232, E268, H271, D296, D307, D309, and D339 each contribute to the Mg(2+) site.

This sequence belongs to the xylose isomerase family. As to quaternary structure, homotetramer. Mg(2+) serves as cofactor.

The protein resides in the cytoplasm. The enzyme catalyses alpha-D-xylose = alpha-D-xylulofuranose. The sequence is that of Xylose isomerase from Histophilus somni (strain 2336) (Haemophilus somnus).